Here is a 156-residue protein sequence, read N- to C-terminus: Ribosome maturation factor RimP (156 aa).

This sequence belongs to the RimP family.

The protein resides in the cytoplasm. Its function is as follows. Required for maturation of 30S ribosomal subunits. The chain is Ribosome maturation factor RimP from Bacillus mycoides (strain KBAB4) (Bacillus weihenstephanensis).